The sequence spans 152 residues: Ninjurin-1 (152 aa).

Methionine 1 carries the N-acetylmethionine modification. The disordered stretch occupies residues 1–26 (MDSGTEEYELNGGLPPGTPGSPDASP). Over 1-78 (MDSGTEEYEL…EQGPSFAFYV (78 aa)) the chain is Extracellular. 2 positions are modified to phosphoserine: serine 21 and serine 25. Residues 26–37 (PARWGWRHGPIN) form an N-terminal adhesion motif region. The required to induce plasma membrane rupture stretch occupies residues 40-69 (HYASKKSAAESMLDIALLMANASQLKAVVE). The tract at residues 44–55 (KKSAAESMLDIA) is helix alpha1. The segment at 58–74 (MANASQLKAVVEQGPSF) is helix alpha2. N-linked (GlcNAc...) asparagine glycosylation is present at asparagine 60. A helical membrane pass occupies residues 79–103 (PLVVLISISLVLQIGVGVLLIFLVK). Over 104-113 (YDLNNPAKHA) the chain is Cytoplasmic. Residues 114–138 (KLDFLNNLATGLVFIIVVVNIFITA) form a helical membrane-spanning segment. The Extracellular segment spans residues 139–152 (FGVQKPLMDMAPQQ).

This sequence belongs to the ninjurin family. Homodimer; in absence of death stimuli, forms an inactive homodimer. Homooligomer; in response to death stimuli, homooligomerizes into long, highly branched filaments and large, ring-shaped structures in the membrane. Cleaved by MMP9 protease to generate the Secreted ninjurin-1 form. Post-translationally, N-linked glycosylation is required for homooligomerization. As to expression, widely expressed in both adult and embryonic tissues, primarily those of epithelial origin.

The protein resides in the cell membrane. It is found in the synaptic cell membrane. The protein localises to the secreted. In response to death stimuli, homooligomerizes and disrupts membrane integrity by introducing the hydrophilic faces of alpha1 and alpha2 helices into the hydrophobic membrane. Homooligomerization and ability to mediate plasma membrane rupture is inhibited by glycine; it is unclear whether glycine directly or indirectly inhibits homooligomerization. In normal conditions, NINJ1 is autoinhibited via formation of a homodimer: in the inactive homodimer, the alpha1 and alpha2 helices (residues 44-74) form a single transmembrane region without a kink, in which hydrophilic faces of alpha1 and alpha2 helices are sequestered. Functionally, effector of various programmed cell death, such as pyroptosis and necroptosis, which mediates plasma membrane rupture (cytolysis). Oligomerizes in response to death stimuli and forms ring-like structures on the plasma membrane: acts by cutting and shedding membrane disks, like a cookie cutter, leading to membrane damage and loss that cannot be repaired by the cell. Plasma membrane rupture leads to release intracellular molecules named damage-associated molecular patterns (DAMPs) that propagate the inflammatory response. Mechanistically, mediates plasma membrane rupture by introducing hydrophilic faces of 2 alpha helices into the hydrophobic membrane. Induces plasma membrane rupture downstream of Gasdermin (GSDMA, GSDMB, GSDMC, GSDMD, or GSDME) or MLKL during pyroptosis or necroptosis, respectively. Acts as an effector of PANoptosis downstream of CASP1, CASP4, CASP8 and RIPK3. Also induces plasma membrane rupture in response to cell swelling caused by osmotic stress and ferroptosis downstream of lipid peroxidation. Acts as a regulator of Toll-like receptor 4 (TLR4) signaling triggered by lipopolysaccharide (LPS) during systemic inflammation; directly binds LPS. Involved in leukocyte migration during inflammation by promoting transendothelial migration of macrophages via homotypic binding. Promotes the migration of monocytes across the brain endothelium to central nervous system inflammatory lesions. Also acts as a homophilic transmembrane adhesion molecule involved in various processes such as axonal growth, cell chemotaxis and angiogenesis. Promotes cell adhesion by mediating homophilic interactions via its extracellular N-terminal adhesion motif (N-NAM). Involved in the progression of the inflammatory stress by promoting cell-to-cell interactions between immune cells and endothelial cells. Plays a role in nerve regeneration by promoting maturation of Schwann cells. Acts as a regulator of angiogenesis. Promotes the formation of new vessels by mediating the interaction between capillary pericyte cells and endothelial cells. Promotes osteoclasts development by enhancing the survival of prefusion osteoclasts. Also involved in striated muscle growth and differentiation. Its function is as follows. Secreted form generated by cleavage, which has chemotactic activity. Acts as an anti-inflammatory mediator by promoting monocyte recruitment, thereby ameliorating atherosclerosis. In Homo sapiens (Human), this protein is Ninjurin-1.